Reading from the N-terminus, the 327-residue chain is Small ribosomal subunit protein RACK1 (327 aa).

7 WD repeats span residues A13 to K44, G61 to D91, G103 to N133, G148 to N180, G192 to D222, E233 to D262, and R293 to G323.

Belongs to the WD repeat G protein beta family. Ribosomal protein RACK1 subfamily.

In Brassica napus (Rape), this protein is Small ribosomal subunit protein RACK1 (GB1).